A 135-amino-acid polypeptide reads, in one-letter code: MADITVVNDTGELYNVINQKKSEGYLESELTIISKSKLHLNDLHDSEISLISTSGTFSDRMTKLLTGEDGEHAVLSRYNLAPDELEKYKQLILDDKMLVVAVRDKSSHQEVHENNSAYEEIDITHFAEASKGPKA.

Belongs to the UPF0355 family.

The protein is UPF0355 protein SACOL0457 of Staphylococcus aureus (strain COL).